A 270-amino-acid chain; its full sequence is Phosphatidylglycerol--prolipoprotein diacylglyceryl transferase (270 aa).

7 consecutive transmembrane segments (helical) span residues 14-34 (VIFE…LLGF), 60-80 (LLFN…VLFY), 95-115 (VWEG…AMLI), 128-148 (ADFV…GNFI), 176-196 (SQLY…NWYI), 202-222 (IGAT…IVEF), and 238-258 (ISMG…IMLV). Arg143 is a binding site for a 1,2-diacyl-sn-glycero-3-phospho-(1'-sn-glycerol).

It belongs to the Lgt family.

It is found in the cell inner membrane. It carries out the reaction L-cysteinyl-[prolipoprotein] + a 1,2-diacyl-sn-glycero-3-phospho-(1'-sn-glycerol) = an S-1,2-diacyl-sn-glyceryl-L-cysteinyl-[prolipoprotein] + sn-glycerol 1-phosphate + H(+). Its pathway is protein modification; lipoprotein biosynthesis (diacylglyceryl transfer). Its function is as follows. Catalyzes the transfer of the diacylglyceryl group from phosphatidylglycerol to the sulfhydryl group of the N-terminal cysteine of a prolipoprotein, the first step in the formation of mature lipoproteins. This chain is Phosphatidylglycerol--prolipoprotein diacylglyceryl transferase, found in Pasteurella multocida (strain Pm70).